A 123-amino-acid polypeptide reads, in one-letter code: UPF0102 protein Fjoh_1217 (123 aa).

The protein belongs to the UPF0102 family.

This chain is UPF0102 protein Fjoh_1217, found in Flavobacterium johnsoniae (strain ATCC 17061 / DSM 2064 / JCM 8514 / BCRC 14874 / CCUG 350202 / NBRC 14942 / NCIMB 11054 / UW101) (Cytophaga johnsonae).